The primary structure comprises 57 residues: Large ribosomal subunit protein bL33 (57 aa).

This sequence belongs to the bacterial ribosomal protein bL33 family.

This is Large ribosomal subunit protein bL33 from Bifidobacterium longum (strain NCC 2705).